We begin with the raw amino-acid sequence, 522 residues long: MSLFSSLVHNVRGQLIARIISFAINMYLLRRINNDVLGLVNVRLTLLYSSILFLTREPLRKAEIIRGSLPKFINLLWLSPIISTVISVVCVYLWYAFSSTSDEVSWSVLLSFPISAIIESIAEPFSVISLRLESKCGSLAQHFAIGQGMLICVKRIFVLAGLFMFPGMYHLELFAYAQYIGAIAYLLFNFVAFYIYIRNKSIPELEQFSTFSDLFPKFSEGIDRDSIHAVFTMFSHSILKQLLTDGSAYVMTFTELLSLKDQAVYDAVERVGSIIVRTILSPIDENCNAYFSNTIRKESSVFNKNTDNHDDLVDTLSKVLHVVGVIGFVACTFGIPYSPVVISLYGGKLLSENGGALLLSLYSGYILVTAINGITEGFAMASMDNRQIFTHGKFLFVTSIIHLIINYVLCVYMNSAGFIVANIINMSVRIIYNWRTIREYLGDKCPSFTEVLPTGQTSIFLGVSLLATSFTYLLFATTPGLSYTLAHIAIGAVCLILTAQDTAQHDSVFTVIVDSLAKKHRD.

10 helical membrane-spanning segments follow: residues 35-55, 75-95, 108-128, 143-165, 177-197, 322-342, 354-374, 400-420, 457-477, and 479-499; these read DVLGLVNVRLTLLYSSILFLT, LLWLSPIISTVISVVCVYLWY, VLLSFPISAIIESIAEPFSVI, FAIGQGMLICVKRIFVLAGLFMF, AQYIGAIAYLLFNFVAFYIYI, VVGVIGFVACTFGIPYSPVVI, GGALLLSLYSGYILVTAINGI, IIHLIINYVLCVYMNSAGFIV, TSIFLGVSLLATSFTYLLFAT, and PGLSYTLAHIAIGAVCLILTA.

This sequence belongs to the RFT1 family.

The protein resides in the endoplasmic reticulum membrane. It participates in protein modification; protein glycosylation. Functionally, intramembrane glycolipid transporter that operates in the biosynthetic pathway of dolichol-linked oligosaccharides, the glycan precursors employed in protein asparagine (N)-glycosylation. The sequential addition of sugars to dolichol pyrophosphate produces dolichol-linked oligosaccharides containing fourteen sugars, including two GlcNAcs, nine mannoses and three glucoses. Once assembled, the oligosaccharide is transferred from the lipid to nascent proteins by oligosaccharyltransferases. The assembly of dolichol-linked oligosaccharides begins on the cytosolic side of the endoplasmic reticulum membrane and finishes in its lumen. RFT1 could mediate the translocation of the cytosolically oriented intermediate DolPP-GlcNAc2Man5, produced by ALG11, into the ER lumen where dolichol-linked oligosaccharides assembly continues. However, the intramembrane lipid transporter activity could not be confirmed in vitro. This Caenorhabditis elegans protein is Man(5)GlcNAc(2)-PP-dolichol translocation protein RFT1.